The sequence spans 206 residues: 2-phospho-L-lactate guanylyltransferase (206 aa).

This sequence belongs to the CofC family. In terms of assembly, homodimer.

The catalysed reaction is (2S)-2-phospholactate + GTP + H(+) = (2S)-lactyl-2-diphospho-5'-guanosine + diphosphate. Its pathway is cofactor biosynthesis; coenzyme F420 biosynthesis. Its function is as follows. Guanylyltransferase that catalyzes the activation of (2S)-2-phospholactate (2-PL) as (2S)-lactyl-2-diphospho-5'-guanosine, via the condensation of 2-PL with GTP. It is involved in the biosynthesis of coenzyme F420, a hydride carrier cofactor. The protein is 2-phospho-L-lactate guanylyltransferase of Archaeoglobus fulgidus (strain ATCC 49558 / DSM 4304 / JCM 9628 / NBRC 100126 / VC-16).